Reading from the N-terminus, the 226-residue chain is ATP synthase F(0) complex subunit a (226 aa).

The next 5 helical transmembrane spans lie at 5 to 25 (LFAP…LIII), 68 to 88 (WSLM…LGML), 97 to 117 (QLSM…TTGF), 136 to 156 (FLIP…PVAW), and 189 to 209 (AFIT…VALI).

This sequence belongs to the ATPase A chain family. In terms of assembly, component of the ATP synthase complex composed at least of ATP5F1A/subunit alpha, ATP5F1B/subunit beta, ATP5MC1/subunit c (homooctomer), MT-ATP6/subunit a, MT-ATP8/subunit 8, ATP5ME/subunit e, ATP5MF/subunit f, ATP5MG/subunit g, ATP5MK/subunit k, ATP5MJ/subunit j, ATP5F1C/subunit gamma, ATP5F1D/subunit delta, ATP5F1E/subunit epsilon, ATP5PF/subunit F6, ATP5PB/subunit b, ATP5PD/subunit d, ATP5PO/subunit OSCP. ATP synthase complex consists of a soluble F(1) head domain (subunits alpha(3) and beta(3)) - the catalytic core - and a membrane F(0) domain - the membrane proton channel (subunits c, a, 8, e, f, g, k and j). These two domains are linked by a central stalk (subunits gamma, delta, and epsilon) rotating inside the F1 region and a stationary peripheral stalk (subunits F6, b, d, and OSCP). Interacts with DNAJC30; interaction is direct.

Its subcellular location is the mitochondrion inner membrane. The catalysed reaction is H(+)(in) = H(+)(out). In terms of biological role, subunit a, of the mitochondrial membrane ATP synthase complex (F(1)F(0) ATP synthase or Complex V) that produces ATP from ADP in the presence of a proton gradient across the membrane which is generated by electron transport complexes of the respiratory chain. ATP synthase complex consist of a soluble F(1) head domain - the catalytic core - and a membrane F(1) domain - the membrane proton channel. These two domains are linked by a central stalk rotating inside the F(1) region and a stationary peripheral stalk. During catalysis, ATP synthesis in the catalytic domain of F(1) is coupled via a rotary mechanism of the central stalk subunits to proton translocation. With the subunit c (ATP5MC1), forms the proton-conducting channel in the F(0) domain, that contains two crucial half-channels (inlet and outlet) that facilitate proton movement from the mitochondrial intermembrane space (IMS) into the matrix. Protons are taken up via the inlet half-channel and released through the outlet half-channel, following a Grotthuss mechanism. The chain is ATP synthase F(0) complex subunit a from Balaenoptera physalus (Fin whale).